The sequence spans 314 residues: GMP synthase [glutamine-hydrolyzing] subunit B (314 aa).

Positions Phe-2 to Arg-186 constitute a GMPS ATP-PPase domain. ATP is bound at residue Ser-29–Thr-35.

In terms of assembly, heterodimer composed of a glutamine amidotransferase subunit (A) and a GMP-binding subunit (B).

It carries out the reaction XMP + L-glutamine + ATP + H2O = GMP + L-glutamate + AMP + diphosphate + 2 H(+). It functions in the pathway purine metabolism; GMP biosynthesis; GMP from XMP (L-Gln route): step 1/1. In terms of biological role, catalyzes the synthesis of GMP from XMP. This Methanopyrus kandleri (strain AV19 / DSM 6324 / JCM 9639 / NBRC 100938) protein is GMP synthase [glutamine-hydrolyzing] subunit B (guaAB).